A 590-amino-acid polypeptide reads, in one-letter code: L-fucose isomerase (590 aa).

Residues Glu-337 and Asp-361 each act as proton acceptor in the active site. 3 residues coordinate Mn(2+): Glu-337, Asp-361, and His-528.

Belongs to the L-fucose isomerase family. The cofactor is Mn(2+).

It localises to the cytoplasm. It carries out the reaction L-fucose = L-fuculose. It participates in carbohydrate degradation; L-fucose degradation; L-lactaldehyde and glycerone phosphate from L-fucose: step 1/3. Functionally, converts the aldose L-fucose into the corresponding ketose L-fuculose. This chain is L-fucose isomerase, found in Bacteroides fragilis (strain YCH46).